We begin with the raw amino-acid sequence, 470 residues long: UDP-N-acetylmuramoylalanine--D-glutamate ligase (470 aa).

121–127 serves as a coordination point for ATP; the sequence is GTNGKST.

This sequence belongs to the MurCDEF family.

Its subcellular location is the cytoplasm. The enzyme catalyses UDP-N-acetyl-alpha-D-muramoyl-L-alanine + D-glutamate + ATP = UDP-N-acetyl-alpha-D-muramoyl-L-alanyl-D-glutamate + ADP + phosphate + H(+). Its pathway is cell wall biogenesis; peptidoglycan biosynthesis. Cell wall formation. Catalyzes the addition of glutamate to the nucleotide precursor UDP-N-acetylmuramoyl-L-alanine (UMA). The sequence is that of UDP-N-acetylmuramoylalanine--D-glutamate ligase from Rhizobium johnstonii (strain DSM 114642 / LMG 32736 / 3841) (Rhizobium leguminosarum bv. viciae).